Here is a 111-residue protein sequence, read N- to C-terminus: Large ribosomal subunit protein uL23 (111 aa).

The protein belongs to the universal ribosomal protein uL23 family. In terms of assembly, part of the 50S ribosomal subunit. Contacts protein L29, and trigger factor when it is bound to the ribosome.

Its function is as follows. One of the early assembly proteins it binds 23S rRNA. One of the proteins that surrounds the polypeptide exit tunnel on the outside of the ribosome. Forms the main docking site for trigger factor binding to the ribosome. In Nitrosomonas europaea (strain ATCC 19718 / CIP 103999 / KCTC 2705 / NBRC 14298), this protein is Large ribosomal subunit protein uL23.